The primary structure comprises 247 residues: Cell division protein ZapD (247 aa).

The protein belongs to the ZapD family. As to quaternary structure, interacts with FtsZ.

It localises to the cytoplasm. Its function is as follows. Cell division factor that enhances FtsZ-ring assembly. Directly interacts with FtsZ and promotes bundling of FtsZ protofilaments, with a reduction in FtsZ GTPase activity. This chain is Cell division protein ZapD, found in Klebsiella pneumoniae subsp. pneumoniae (strain ATCC 700721 / MGH 78578).